Consider the following 359-residue polypeptide: Src kinase-associated phosphoprotein 2 (359 aa).

Phosphoserine occurs at positions 5, 6, and 9. The homodimerization stretch occupies residues Pro14–Gln64. The interval Lys66–Leu88 is disordered. Tyr75 is subject to Phosphotyrosine. Phosphoserine occurs at positions 87 and 90. In terms of domain architecture, PH spans Phe116–Gln219. Tyr151 and Tyr197 each carry phosphotyrosine. The residue at position 223 (Ser223) is a Phosphoserine. Phosphotyrosine is present on Tyr261. The interval Leu264–Asp293 is disordered. Over residues Lys275–Asp293 the composition is skewed to basic and acidic residues. Residues Ser283 and Ser286 each carry the phosphoserine modification. The 62-residue stretch at Asp297–Asp358 folds into the SH3 domain.

It belongs to the SKAP family. In terms of assembly, homodimer. Interacts with PTPNS1. Part of a complex consisting of SKAP2, FYB1 and PTPNS1. Part of a complex consisting of SKAP2, FYB1 and LILRB3. May interact with actin. Interacts with FYB1, which is required for SKAP2 protein stability. Interacts with LAT, GRB2, PTK2B and PRAM1. May interact with FYN, HCK and LYN. Interacts with FASLG. In terms of processing, phosphorylated in resting platelets. Phosphorylated by FYN on Tyr-261 upon T-cell activation. Dephosphorylated on Tyr-75 by PTPN22. In terms of tissue distribution, ubiquitously expressed. Present in platelets (at protein level).

The protein resides in the cytoplasm. In terms of biological role, may be involved in B-cell and macrophage adhesion processes. In B-cells, may act by coupling the B-cell receptor (BCR) to integrin activation. May play a role in src signaling pathway. The sequence is that of Src kinase-associated phosphoprotein 2 (SKAP2) from Homo sapiens (Human).